The following is a 696-amino-acid chain: uncharacterized protein (696 aa).

A run of 10 helical transmembrane segments spans residues 38–58 (IISI…NALA), 107–127 (LIYV…GYVV), 215–235 (AMAS…IFAL), 245–265 (SLFT…VVAL), 292–312 (TLPF…LIYL), 329–349 (VFFV…ILGE), 380–400 (FWVT…LTSA), 402–422 (FGAA…ACIG), 433–453 (FPSL…FLSS), and 457–477 (LVVA…IALP). 2 CBS domains span residues 527-587 (RSPE…PMSS) and 617-674 (IHPT…THTG).

The protein belongs to the chloride channel (TC 2.A.49) family.

Its subcellular location is the membrane. Its function is as follows. Voltage-gated chloride channel. This is an uncharacterized protein from Schizosaccharomyces pombe (strain 972 / ATCC 24843) (Fission yeast).